Reading from the N-terminus, the 531-residue chain is Polyamine transporter PUT1 (531 aa).

Residues 1 to 76 (MADTGGRPEV…LPDGDAGGPM (76 aa)) form a disordered region. Residues 17–33 (SPGHPAASTTAAAAADL) show a composition bias toward low complexity. Over residues 34–44 (GHADTGQEKPT) the composition is skewed to basic and acidic residues. A run of 12 helical transmembrane segments spans residues 83–103 (VSMI…PFGI), 113–133 (LLAI…EALI), 147–167 (YVVW…GWMK), 193–213 (LGGG…LTLL), 224–244 (VAIC…LIAL), 262–284 (WNLY…TLAG), 296–316 (ALFY…LAGT), 341–361 (AWLM…MFVA), 391–411 (TPLA…MMSF), 414–434 (IVAA…VAFI), 453–473 (TAGC…VLAL), and 476–496 (LKVA…QPAL).

This sequence belongs to the amino acid-polyamine-organocation (APC) superfamily. Polyamine:cation symporter (PHS) (TC 2.A.3.12) family. As to expression, expressed in seedling roots, leaves, stems, flowers and siliques.

It is found in the cell membrane. Cell membrane polyamine/proton symporter involved in the polyamine uptake in cells. Possesses high affinity for spermidine and lower affinity for spermine and putrescine. Transports paraquat, a polyamine analog, and thus confers sensitivity to this chemical which is used as a herbicide. This is Polyamine transporter PUT1 (PUT1) from Oryza sativa subsp. japonica (Rice).